The sequence spans 547 residues: MRLRNGTFLTVLLFGLCGLISLSWYTAFSNSKGNVVDIYQREFLALRDRLHSAEQENLKRSKELNLVLDEIKRAIAEKQALRDINRTWSSLSDETKLKLWNVTSSKNVLQLPSIFHHLPHLLAKESSLQPAVHIGQGRTGVSIVLGVPSVKREVHSYLTDTLSSLMTELSPAEKEDCVIVVFIAETDQQYANSVADNLKRLFPGEIQSGLLEIISPSVHFYPDFSHLKESFGDPKERVRWRTKQNLDYCFLMMYAQTKGNYYVQLEDDIVARPNYFTTMKNFALQQPSEEWMILEFSQLGFIGKMFKSLDLPLIVEFMLMFYKDKPIDWLLDHIMWVKVCNPEKDAKHCDRQKANLRIRFKPSLFQHVGTHSSLAGKIQKLKDKDFGKQTLHKGHANPLAEVTTSLKTYQHFTLEKAYLGEDFFWAFTPVAGDFIRIRFFTPVRVERYFFRSGNIEHPGDKLFNTTVEVLPFDNIQSEKEALKEGREKTPKYQRTEDGFIRIGKFENGIAEGEVDASFGPLEALRLSVLTDSPVWVILSEIFIKKAE.

Over 1 to 7 (MRLRNGT) the chain is Cytoplasmic. A helical; Signal-anchor for type II membrane protein membrane pass occupies residues 8–28 (FLTVLLFGLCGLISLSWYTAF). The Lumenal segment spans residues 29–547 (SNSKGNVVDI…LSEIFIKKAE (519 aa)). Residues 36–83 (VDIYQREFLALRDRLHSAEQENLKRSKELNLVLDEIKRAIAEKQALRD) adopt a coiled-coil conformation. N-linked (GlcNAc...) asparagine glycosylation is found at N85, N101, and N464.

It belongs to the glycosyltransferase 54 family. A divalent metal cation is required as a cofactor. N-glycosylated.

The protein localises to the golgi apparatus membrane. It catalyses the reaction N(4)-{beta-D-GlcNAc-(1-&gt;2)-alpha-D-Man-(1-&gt;3)-[beta-D-GlcNAc-(1-&gt;2)-alpha-D-Man-(1-&gt;6)]-beta-D-Man-(1-&gt;4)-beta-D-GlcNAc-(1-&gt;4)-beta-D-GlcNAc}-L-asparaginyl-[protein] + UDP-N-acetyl-alpha-D-glucosamine = N(4)-{beta-D-GlcNAc-(1-&gt;2)-[beta-D-GlcNAc-(1-&gt;4)]-alpha-D-Man-(1-&gt;3)-[beta-D-GlcNAc-(1-&gt;2)-alpha-D-Man-(1-&gt;6)]-beta-D-Man-(1-&gt;4)-beta-D-GlcNAc-(1-&gt;4)-beta-D-GlcNAc}-L-asparaginyl-[protein] + UDP + H(+). The enzyme catalyses an N(4)-{beta-D-GlcNAc-(1-&gt;2)-alpha-D-Man-(1-&gt;3)-[alpha-D-Man-(1-&gt;6)]-beta-D-Man-(1-&gt;4)-beta-D-GlcNAc-(1-&gt;4)-beta-D-GlcNAc}-L-asparaginyl-[protein] + UDP-N-acetyl-alpha-D-glucosamine = an N(4)-{beta-D-GlcNAc-(1-&gt;2)-[beta-D-GlcNAc-(1-&gt;4)]-alpha-D-Man-(1-&gt;3)-[alpha-D-Man-(1-&gt;6)]-beta-D-Man-(1-&gt;4)-beta-D-GlcNAc-(1-&gt;4)-beta-D-GlcNAc}-L-asparaginyl-[protein] + UDP + H(+). The catalysed reaction is an N(4)-{beta-D-GlcNAc-(1-&gt;2)-alpha-D-Man-(1-&gt;3)-[beta-D-GlcNAc-(1-&gt;2)-[beta-D-GlcNAc-(1-&gt;6)]-alpha-D-Man-(1-&gt;6)]-beta-D-Man-(1-&gt;4)-beta-D-GlcNAc-(1-&gt;4)-beta-D-GlcNAc}-L-asparaginyl-[protein] + UDP-N-acetyl-alpha-D-glucosamine = an N(4)-{beta-D-GlcNAc-(1-&gt;2)-[beta-D-GlcNAc-(1-&gt;4)]-alpha-D-Man-(1-&gt;3)-[beta-D-GlcNAc-(1-&gt;2)-[beta-D-GlcNAc-(1-&gt;6)]-alpha-D-Man-(1-&gt;6)]-beta-D-Man-(1-&gt;4)-beta-D-GlcNAc-(1-&gt;4)-beta-D-GlcNAc}-L-asparaginyl-[protein] + UDP + H(+). It carries out the reaction an N(4)-{beta-D-GlcNAc-(1-&gt;2)-alpha-D-Man-(1-&gt;3)-[beta-D-GlcNAc-(1-&gt;2)-alpha-D-Man-(1-&gt;6)]-beta-D-Man-(1-&gt;4)-beta-D-GlcNAc-(1-&gt;4)-[alpha-L-Fuc-(1-&gt;6)]-beta-D-GlcNAc}-L-asparaginyl-[protein] + UDP-N-acetyl-alpha-D-glucosamine = N(4)-{beta-D-GlcNAc-(1-&gt;2)-[beta-D-GlcNAc-(1-&gt;4)]-alpha-D-Man-(1-&gt;3)-[beta-D-GlcNAc-(1-&gt;2)-alpha-D-Man-(1-&gt;6)]-beta-D-Man-(1-&gt;4)-beta-D-GlcNAc-(1-&gt;4)-[alpha-L-Fuc-(1-&gt;6)]-beta-D-GlcNAc}-asparaginyl-[protein] + UDP + H(+). It catalyses the reaction an N(4)-{beta-D-GlcNAc-(1-&gt;2)-alpha-D-Man-(1-&gt;3)-[beta-D-Gal-(1-&gt;4)-beta-D-GlcNAc-(1-&gt;2)-alpha-D-Man-(1-&gt;6)]-beta-D-Man-(1-&gt;4)-beta-D-GlcNAc-(1-&gt;4)-beta-D-GlcNAc}-L-asparaginyl-[protein] + UDP-N-acetyl-alpha-D-glucosamine = an N(4)-{beta-D-GlcNAc-(1-&gt;2)-[beta-D-GlcNAc-(1-&gt;4)]-alpha-D-Man-(1-&gt;3)-[beta-D-Gal-(1-&gt;4)-beta-D-GlcNAc-(1-&gt;2)-alpha-D-Man-(1-&gt;6)]-beta-D-Man-(1-&gt;4)-beta-D-GlcNAc-(1-&gt;4)-beta-D-GlcNAc}-L-asparaginyl-[protein] + UDP + H(+). The enzyme catalyses N(4)-{beta-D-GlcNAc-(1-&gt;2)-alpha-D-Man-(1-&gt;3)-[alpha-D-Man-(1-&gt;3)-{alpha-D-Man-(1-&gt;6)}-alpha-D-Man-(1-&gt;6)]-beta-D-Man-(1-&gt;4)-beta-D-GlcNAc-(1-&gt;4)-beta-D-GlcNAc}-asparaginyl-[protein] + UDP-N-acetyl-alpha-D-glucosamine = N(4)-{beta-D-GlcNAc-(1-&gt;2)-[beta-D-GlcNAc-(1-&gt;4)]-alpha-D-Man-(1-&gt;3)-[alpha-D-Man-(1-&gt;3)-{alpha-D-Man-(1-&gt;6)}-alpha-D-Man-(1-&gt;6)]-beta-D-Man-(1-&gt;4)-beta-D-GlcNAc-(1-&gt;4)-beta-D-GlcNAc}-asparaginyl-[protein] + UDP + H(+). The catalysed reaction is N(4)-{beta-D-GlcNAc-(1-&gt;2)-alpha-D-Man-(1-&gt;3)-beta-D-Man-(1-&gt;4)-beta-D-GlcNAc-(1-&gt;4)-beta-D-GlcNAc}-asparaginyl-[protein] + UDP-N-acetyl-alpha-D-glucosamine = N(4)-{beta-D-GlcNAc-(1-&gt;2)-[beta-D-GlcNAc-(1-&gt;4)]-alpha-D-Man-(1-&gt;3)-beta-D-Man-(1-&gt;4)-beta-D-GlcNAc-(1-&gt;4)-beta-D-GlcNAc}-asparaginyl-[protein] + UDP + H(+). Its pathway is protein modification; protein glycosylation. Glycosyltransferase that catalyze the transfer of GlcNAc from UDP-GlcNAc to the GlcNAcbeta1-2Manalpha1-3 arm of the core structure of N-linked glycans through a beta1-4 linkage and participates in the production of tri- and tetra-antennary N-linked sugar chains. Prefers complex-type N-glycans over hybrid-types. Has lower affinities for donors or acceptors than MGAT4A, suggesting that, under physiological conditions, it is not the main contributor in N-glycan biosynthesis. This is Alpha-1,3-mannosyl-glycoprotein 4-beta-N-acetylglucosaminyltransferase B (mgat4bQ9UQ53) from Danio rerio (Zebrafish).